The following is a 293-amino-acid chain: Glycine--tRNA ligase alpha subunit (293 aa).

It belongs to the class-II aminoacyl-tRNA synthetase family. Tetramer of two alpha and two beta subunits.

It localises to the cytoplasm. It catalyses the reaction tRNA(Gly) + glycine + ATP = glycyl-tRNA(Gly) + AMP + diphosphate. This is Glycine--tRNA ligase alpha subunit from Acaryochloris marina (strain MBIC 11017).